A 292-amino-acid chain; its full sequence is ATP synthase gamma chain (292 aa).

The protein belongs to the ATPase gamma chain family. F-type ATPases have 2 components, CF(1) - the catalytic core - and CF(0) - the membrane proton channel. CF(1) has five subunits: alpha(3), beta(3), gamma(1), delta(1), epsilon(1). CF(0) has three main subunits: a, b and c.

It localises to the cell inner membrane. Produces ATP from ADP in the presence of a proton gradient across the membrane. The gamma chain is believed to be important in regulating ATPase activity and the flow of protons through the CF(0) complex. The sequence is that of ATP synthase gamma chain from Hydrogenobaculum sp. (strain Y04AAS1).